The following is a 204-amino-acid chain: MIGRLRGTLIEKLPPQILIEVGGIGYEVQMPMSCIYELPNIGEEAIIYTHFVVREDAQLLYGFNTVSERALFREVIKANGVGPKMGLAILSGMTANQFVTCVEKEDISTLIKLPGVGKKTAERLVVEMKDRLKGWGAGDLFTPATDAAPVDSTPVIAQNAQEEAMSALLALGYKPPQASKAVSQVAKAGMSSEELIREALKSMV.

A domain I region spans residues 1–64; sequence MIGRLRGTLI…EDAQLLYGFN (64 aa). The domain II stretch occupies residues 65–143; the sequence is TVSERALFRE…GWGAGDLFTP (79 aa). Positions 144 to 155 are flexible linker; it reads ATDAAPVDSTPV. Positions 156–204 are domain III; the sequence is IAQNAQEEAMSALLALGYKPPQASKAVSQVAKAGMSSEELIREALKSMV.

Belongs to the RuvA family. In terms of assembly, homotetramer. Forms an RuvA(8)-RuvB(12)-Holliday junction (HJ) complex. HJ DNA is sandwiched between 2 RuvA tetramers; dsDNA enters through RuvA and exits via RuvB. An RuvB hexamer assembles on each DNA strand where it exits the tetramer. Each RuvB hexamer is contacted by two RuvA subunits (via domain III) on 2 adjacent RuvB subunits; this complex drives branch migration. In the full resolvosome a probable DNA-RuvA(4)-RuvB(12)-RuvC(2) complex forms which resolves the HJ.

The protein localises to the cytoplasm. Functionally, the RuvA-RuvB-RuvC complex processes Holliday junction (HJ) DNA during genetic recombination and DNA repair, while the RuvA-RuvB complex plays an important role in the rescue of blocked DNA replication forks via replication fork reversal (RFR). RuvA specifically binds to HJ cruciform DNA, conferring on it an open structure. The RuvB hexamer acts as an ATP-dependent pump, pulling dsDNA into and through the RuvAB complex. HJ branch migration allows RuvC to scan DNA until it finds its consensus sequence, where it cleaves and resolves the cruciform DNA. The protein is Holliday junction branch migration complex subunit RuvA of Vibrio cholerae serotype O1 (strain ATCC 39541 / Classical Ogawa 395 / O395).